The primary structure comprises 626 residues: MLAFAARTVVKPLGFLKPFSLMKASSRFKAHQDALPRLPVPPLQQSLDHYLKALQPIVSEEEWAHTKQLVDEFQASGGVGERLQKGLERRARKTENWLSEWWLKTAYLQYRQPVVIYSSPGVMLPKQDFVDLQGQLRFAAKLIEGVLDFKVMIDNETLPVEYLGGKPLCMNQYYQILSSCRVPGPKQDTVSNFSKTKKPPTHITVVHNYQFFELDVYHSDGTPLTADQIFVQLEKIWNSSLQTNKEPVGILTSNHRNSWAKAYNTLIKDKVNRDSVRSIQKSIFTVCLDATMPRVSEDVYRSHVAGQMLHGGGSRLNSGNRWFDKTLQFIVAEDGSCGLVYEHAAAEGPPIVTLLDYVIEYTKKPELVRSPLVPLPMPKKLRFNITPEIKSDIEKAKQNLSIMIQDLDITVMVFHHFGKDFPKSEKLSPDAFIQMALQLAYYRIYGQACATYESASLRMFHLGRTDTIRSASMDSLTFVKAMDDSSVTEHQKVELLRKAVQAHRGYTDRAIRGEAFDRHLLGLKLQAIEDLVSMPDIFMDTSYAIAMHFHLSTSQVPAKTDCVMFFGPVVPDGYGVCYNPMEAHINFSLSAYNSCAETNAARLAHYLEKALLDMRALLQSHPRAKL.

Lys-93 is modified (N6-succinyllysine). Position 261 is an N6-acetyllysine; alternate (Lys-261). Position 261 is an N6-succinyllysine; alternate (Lys-261). An N6-acetyllysine modification is found at Lys-268. Catalysis depends on His-343, which acts as the Proton acceptor. CoA contacts are provided by residues Lys-419 and 423-430 (KSEKLSPD). (R)-carnitine-binding residues include Tyr-452 and Ser-454. A CoA-binding site is contributed by Ser-456. Thr-465 provides a ligand contact to (R)-carnitine. 2 residues coordinate CoA: Arg-504 and Gln-555. A Microbody targeting signal motif is present at residues 624–626 (AKL).

This sequence belongs to the carnitine/choline acetyltransferase family. Monomer. In terms of tissue distribution, mostly in skeletal muscle, less in heart, liver and pancreas, only weakly detectable in brain, placenta, lung and kidney.

The protein localises to the endoplasmic reticulum. Its subcellular location is the peroxisome. The protein resides in the mitochondrion inner membrane. It is found in the mitochondrion. It carries out the reaction (R)-carnitine + acetyl-CoA = O-acetyl-(R)-carnitine + CoA. The catalysed reaction is propanoyl-CoA + (R)-carnitine = O-propanoyl-(R)-carnitine + CoA. It catalyses the reaction butanoyl-CoA + (R)-carnitine = O-butanoyl-(R)-carnitine + CoA. The enzyme catalyses hexanoyl-CoA + (R)-carnitine = O-hexanoyl-(R)-carnitine + CoA. It carries out the reaction octanoyl-CoA + (R)-carnitine = O-octanoyl-(R)-carnitine + CoA. The catalysed reaction is decanoyl-CoA + (R)-carnitine = O-decanoyl-(R)-carnitine + CoA. It catalyses the reaction 3-methylbutanoyl-CoA + (R)-carnitine = O-3-methylbutanoyl-(R)-carnitine + CoA. The enzyme catalyses 2-methylpropanoyl-CoA + (R)-carnitine = O-isobutanoyl-(R)-carnitine + CoA. It carries out the reaction 2-methylbutanoyl-CoA + (R)-carnitine = O-2-methylbutanoyl-(R)-carnitine + CoA. The catalysed reaction is acetoacetyl-CoA + (R)-carnitine = O-3-oxobutanoyl-(R)-carnitine + CoA. It catalyses the reaction 3-hydroxybutanoyl-CoA + (R)-carnitine = O-3-hydroxybutanoyl-(R)-carnitine + CoA. The enzyme catalyses 4,8-dimethylnonanoyl-CoA + (R)-carnitine = O-4,8-dimethylnonanoyl-(R)-carnitine + CoA. It carries out the reaction 2,6-dimethylheptanoyl-CoA + (R)-carnitine = O-2,6-dimethylheptanoyl-(R)-carnitine + CoA. Catalyzes the reversible transfer of acyl groups from carnitine to coenzyme A (CoA) and regulates the acyl-CoA/CoA ratio. Also plays a crucial role in the transport of fatty acids for beta-oxidation. Responsible for the synthesis of short- and branched-chain acylcarnitines. Active towards some branched-chain amino acid oxidation pathway (BCAAO) intermediates. Trans-2-enoyl-CoAs and 2-methylacyl-CoAs are poor substrates. The chain is Carnitine O-acetyltransferase from Homo sapiens (Human).